An 89-amino-acid polypeptide reads, in one-letter code: MSRQVFCRKYQKEMEGLDFAPFPGAKGQEFFENVSKQAWQEWLQHQTTLINEKRLNVFEPEAKKFLEEQREKFFNNDESVEKAEGWKPE.

This sequence belongs to the Fe(2+)-trafficking protein family.

Could be a mediator in iron transactions between iron acquisition and iron-requiring processes, such as synthesis and/or repair of Fe-S clusters in biosynthetic enzymes. This chain is Probable Fe(2+)-trafficking protein, found in Acinetobacter baumannii (strain AB0057).